The following is a 207-amino-acid chain: ATP-dependent Clp protease proteolytic subunit (207 aa).

Residue Ser-111 is the Nucleophile of the active site. The active site involves His-136.

This sequence belongs to the peptidase S14 family. In terms of assembly, fourteen ClpP subunits assemble into 2 heptameric rings which stack back to back to give a disk-like structure with a central cavity, resembling the structure of eukaryotic proteasomes.

It is found in the cytoplasm. The catalysed reaction is Hydrolysis of proteins to small peptides in the presence of ATP and magnesium. alpha-casein is the usual test substrate. In the absence of ATP, only oligopeptides shorter than five residues are hydrolyzed (such as succinyl-Leu-Tyr-|-NHMec, and Leu-Tyr-Leu-|-Tyr-Trp, in which cleavage of the -Tyr-|-Leu- and -Tyr-|-Trp bonds also occurs).. In terms of biological role, cleaves peptides in various proteins in a process that requires ATP hydrolysis. Has a chymotrypsin-like activity. Plays a major role in the degradation of misfolded proteins. The chain is ATP-dependent Clp protease proteolytic subunit from Aeromonas salmonicida (strain A449).